The following is a 241-amino-acid chain: Homeobox protein TGIF2LX (241 aa).

Disordered stretches follow at residues 1 to 56 and 115 to 213; these read MEAA…PKGY and RHGN…EYPD. Positions 21–39 are enriched in polar residues; sequence AKTQSPAQDTSTVSRNSAD. A DNA-binding region (homeobox; TALE-type) is located at residues 48 to 111; sequence EHTKKPKGYL…INARRRILPD (64 aa).

This sequence belongs to the TALE/TGIF homeobox family.

It localises to the nucleus. Functionally, may have a transcription role in testis. The sequence is that of Homeobox protein TGIF2LX (TGIF2LX) from Hylobates lar (Lar gibbon).